We begin with the raw amino-acid sequence, 217 residues long: 3,4-dihydroxy-2-butanone 4-phosphate synthase (217 aa).

D-ribulose 5-phosphate contacts are provided by residues R40 to E41, D45, R153 to T157, and E177. E41 lines the Mg(2+) pocket. H156 contacts Mg(2+).

It belongs to the DHBP synthase family. In terms of assembly, homodimer. The cofactor is Mg(2+). It depends on Mn(2+) as a cofactor.

The catalysed reaction is D-ribulose 5-phosphate = (2S)-2-hydroxy-3-oxobutyl phosphate + formate + H(+). It participates in cofactor biosynthesis; riboflavin biosynthesis; 2-hydroxy-3-oxobutyl phosphate from D-ribulose 5-phosphate: step 1/1. Its function is as follows. Catalyzes the conversion of D-ribulose 5-phosphate to formate and 3,4-dihydroxy-2-butanone 4-phosphate. This Aliivibrio fischeri (Vibrio fischeri) protein is 3,4-dihydroxy-2-butanone 4-phosphate synthase.